The primary structure comprises 551 residues: Chaperonin GroEL (551 aa).

Residues 30 to 33 (TLGP), Lys51, 87 to 91 (DGTTT), Gly415, 479 to 481 (NAA), and Asp495 each bind ATP.

It belongs to the chaperonin (HSP60) family. In terms of assembly, forms a cylinder of 14 subunits composed of two heptameric rings stacked back-to-back. Interacts with the co-chaperonin GroES.

The protein resides in the cytoplasm. It catalyses the reaction ATP + H2O + a folded polypeptide = ADP + phosphate + an unfolded polypeptide.. Its function is as follows. Together with its co-chaperonin GroES, plays an essential role in assisting protein folding. The GroEL-GroES system forms a nano-cage that allows encapsulation of the non-native substrate proteins and provides a physical environment optimized to promote and accelerate protein folding. The protein is Chaperonin GroEL of Acidithiobacillus ferrooxidans (strain ATCC 23270 / DSM 14882 / CIP 104768 / NCIMB 8455) (Ferrobacillus ferrooxidans (strain ATCC 23270)).